The primary structure comprises 426 residues: Serine hydroxymethyltransferase (426 aa).

Residues Leu-115 and 119–121 (GHI) contribute to the (6S)-5,6,7,8-tetrahydrofolate site. Residue Lys-225 is modified to N6-(pyridoxal phosphate)lysine.

Belongs to the SHMT family. As to quaternary structure, homodimer. Pyridoxal 5'-phosphate serves as cofactor.

It localises to the cytoplasm. It participates in amino-acid biosynthesis; glycine biosynthesis; glycine from L-serine: step 1/1. Catalyzes the reversible interconversion of serine and glycine with a modified folate serving as the one-carbon carrier. Also exhibits a pteridine-independent aldolase activity toward beta-hydroxyamino acids, producing glycine and aldehydes, via a retro-aldol mechanism. The chain is Serine hydroxymethyltransferase from Thermoplasma acidophilum (strain ATCC 25905 / DSM 1728 / JCM 9062 / NBRC 15155 / AMRC-C165).